Reading from the N-terminus, the 416-residue chain is Serine hydroxymethyltransferase (416 aa).

(6S)-5,6,7,8-tetrahydrofolate contacts are provided by residues L118 and 122-124 (GHL). At K226 the chain carries N6-(pyridoxal phosphate)lysine. Residues E242 and 350-352 (SPF) each bind (6S)-5,6,7,8-tetrahydrofolate.

It belongs to the SHMT family. As to quaternary structure, homodimer. Pyridoxal 5'-phosphate serves as cofactor.

The protein localises to the cytoplasm. The enzyme catalyses (6R)-5,10-methylene-5,6,7,8-tetrahydrofolate + glycine + H2O = (6S)-5,6,7,8-tetrahydrofolate + L-serine. It participates in one-carbon metabolism; tetrahydrofolate interconversion. It functions in the pathway amino-acid biosynthesis; glycine biosynthesis; glycine from L-serine: step 1/1. Functionally, catalyzes the reversible interconversion of serine and glycine with tetrahydrofolate (THF) serving as the one-carbon carrier. This reaction serves as the major source of one-carbon groups required for the biosynthesis of purines, thymidylate, methionine, and other important biomolecules. Also exhibits THF-independent aldolase activity toward beta-hydroxyamino acids, producing glycine and aldehydes, via a retro-aldol mechanism. The polypeptide is Serine hydroxymethyltransferase (Helicobacter hepaticus (strain ATCC 51449 / 3B1)).